The sequence spans 163 residues: Putative 4-hydroxy-4-methyl-2-oxoglutarate aldolase (163 aa).

Residues Gly-76–Leu-79 and Arg-98 each bind substrate. Asp-99 contacts a divalent metal cation.

Belongs to the class II aldolase/RraA-like family. As to quaternary structure, homotrimer. A divalent metal cation serves as cofactor.

The enzyme catalyses 4-hydroxy-4-methyl-2-oxoglutarate = 2 pyruvate. It catalyses the reaction oxaloacetate + H(+) = pyruvate + CO2. Its function is as follows. Catalyzes the aldol cleavage of 4-hydroxy-4-methyl-2-oxoglutarate (HMG) into 2 molecules of pyruvate. Also contains a secondary oxaloacetate (OAA) decarboxylase activity due to the common pyruvate enolate transition state formed following C-C bond cleavage in the retro-aldol and decarboxylation reactions. This Pseudomonas fluorescens (strain ATCC BAA-477 / NRRL B-23932 / Pf-5) protein is Putative 4-hydroxy-4-methyl-2-oxoglutarate aldolase.